The chain runs to 382 residues: ATP phosphoribosyltransferase regulatory subunit (382 aa).

Belongs to the class-II aminoacyl-tRNA synthetase family. HisZ subfamily. As to quaternary structure, heteromultimer composed of HisG and HisZ subunits.

It localises to the cytoplasm. Its pathway is amino-acid biosynthesis; L-histidine biosynthesis; L-histidine from 5-phospho-alpha-D-ribose 1-diphosphate: step 1/9. Required for the first step of histidine biosynthesis. May allow the feedback regulation of ATP phosphoribosyltransferase activity by histidine. The chain is ATP phosphoribosyltransferase regulatory subunit from Burkholderia lata (strain ATCC 17760 / DSM 23089 / LMG 22485 / NCIMB 9086 / R18194 / 383).